The sequence spans 193 residues: Ion-translocating oxidoreductase complex subunit A (193 aa).

6 helical membrane-spanning segments follow: residues 5-25 (LLLF…FLGL), 47-67 (FVMT…LIPL), 72-92 (LRTL…EMVV), 102-122 (LLGI…VALL), 134-154 (ALYG…FAAI), and 171-191 (AIAL…SGLV).

The protein belongs to the NqrDE/RnfAE family. In terms of assembly, the complex is composed of six subunits: RnfA, RnfB, RnfC, RnfD, RnfE and RnfG.

Its subcellular location is the cell inner membrane. In terms of biological role, part of a membrane-bound complex that couples electron transfer with translocation of ions across the membrane. The polypeptide is Ion-translocating oxidoreductase complex subunit A (Citrobacter koseri (strain ATCC BAA-895 / CDC 4225-83 / SGSC4696)).